Here is a 52-residue protein sequence, read N- to C-terminus: MFDINLTHEQQQKAVEQIQELMAKGISSGEAIQIVAKALREIHKNDKKTPEN.

The protein belongs to the UPF0181 family.

The chain is UPF0181 protein CGSHiGG_01050 from Haemophilus influenzae (strain PittGG).